Reading from the N-terminus, the 424-residue chain is MAKNIQAIRGMNDYLPGETAIWQRIEGTLKNVLGSYGYSEIRLPIVEQTPLFKRAIGEVTDVVEKEMYTFEDRNGDSLTLRPEGTAGCVRAGIEHGLLYNQEQRLWYIGPMFRHERPQKGRYRQFHQLGCEVFGLQGPDIDAELIMLTARWWRALGIFEHVTLELNSIGSLEARANYRDALVAFLEQHKEKLDEDCKRRMYTNPLRVLDSKNPEVQALLNDAPALGDYLDEESREHFAGLCKLLESAGIAYTVNQRLVRGLDYYNRTVFEWVTNSLGSQGTVCAGGRYDGLVEQLGGRATPAVGFAMGLERLVLLVQAVNPEFKADPVVDIYLVASGADTQSAAMALAERLRDELPGVKLMTNHGGGNFKKQFARADKWGARVAVVLGESEVANGTAVVKDLRSGEQTAVAQDSVAAHLRTLLG.

The protein belongs to the class-II aminoacyl-tRNA synthetase family. Homodimer.

Its subcellular location is the cytoplasm. It catalyses the reaction tRNA(His) + L-histidine + ATP = L-histidyl-tRNA(His) + AMP + diphosphate + H(+). The sequence is that of Histidine--tRNA ligase from Shigella sonnei (strain Ss046).